Reading from the N-terminus, the 435-residue chain is ATP-dependent RNA helicase RhlB (435 aa).

Residues Gln9–Ala37 carry the Q motif motif. The region spanning Leu40–Val219 is the Helicase ATP-binding domain. Ala53–Thr60 contributes to the ATP binding site. Positions Asp165–Asp168 match the DEAD box motif. In terms of domain architecture, Helicase C-terminal spans Ala245–Ile390. The disordered stretch occupies residues Ala395–Ala435. The span at Ser401–Gly413 shows a compositional bias: polar residues. Over residues Asn422–Ala435 the composition is skewed to basic residues.

It belongs to the DEAD box helicase family. RhlB subfamily. As to quaternary structure, component of the RNA degradosome, which is a multiprotein complex involved in RNA processing and mRNA degradation.

It is found in the cytoplasm. The catalysed reaction is ATP + H2O = ADP + phosphate + H(+). Its function is as follows. DEAD-box RNA helicase involved in RNA degradation. Has RNA-dependent ATPase activity and unwinds double-stranded RNA. This is ATP-dependent RNA helicase RhlB from Vibrio vulnificus (strain CMCP6).